A 698-amino-acid polypeptide reads, in one-letter code: Ubiquitin-like modifier-activating enzyme ATG7 (698 aa).

The FAP motif motif lies at 11 to 13; that stretch reads FAP. Lysine 41 is covalently cross-linked (Glycyl lysine isopeptide (Lys-Gly) (interchain with G-Cter in ubiquitin)). Cysteine 567 functions as the Glycyl thioester intermediate in the catalytic mechanism. Serine 693 bears the Phosphoserine mark.

The protein belongs to the ATG7 family. Homodimer. Interacts with ATG3; this interaction is essential for the transfer of ATG8-like proteins's thioester from ATG7 to ATG3 and plays a role in the conjugation of ATG12 to ATG5. Interacts with ATG12. Interacts with ATG10. Forms intermediate conjugates with GABARAPL1. Forms intermediate conjugates with ATG8-like proteins such as GABARAP, GABARAPL2 or MAP1LC3A. Interacts with EP300 acetyltransferase. Interacts with FOXO1. Post-translationally, acetylated by EP300. Polyubiquitinated on Lys-41 via 'Lys-63'-linked ubiquitin by TRIM32; this modification positiely regulates ATG8 and ATG12 activating enzyme activity leading to initiation of autophagy under metabolic stress. In terms of tissue distribution, widely expressed, especially in kidney, liver, lymph nodes and bone marrow.

The protein localises to the cytoplasm. Its subcellular location is the preautophagosomal structure. In terms of biological role, E1-like activating enzyme involved in the 2 ubiquitin-like systems required for cytoplasm to vacuole transport (Cvt) and autophagy. Activates ATG12 for its conjugation with ATG5 as well as the ATG8 family proteins for their conjugation with phosphatidylethanolamine. Both systems are needed for the ATG8 association to Cvt vesicles and autophagosomes membranes. Facilitates LC3-I lipidation with phosphatidylethanolamine to form LC3-II which is found on autophagosomal membranes. Required for autophagic death induced by caspase-8 inhibition. Required for mitophagy which contributes to regulate mitochondrial quantity and quality by eliminating the mitochondria to a basal level to fulfill cellular energy requirements and preventing excess ROS production. Modulates p53/TP53 activity to regulate cell cycle and survival during metabolic stress. Also plays a key role in the maintenance of axonal homeostasis, the prevention of axonal degeneration, the maintenance of hematopoietic stem cells, the formation of Paneth cell granules, as well as in adipose differentiation. Plays a role in regulating the liver clock and glucose metabolism by mediating the autophagic degradation of CRY1 (clock repressor) in a time-dependent manner. The sequence is that of Ubiquitin-like modifier-activating enzyme ATG7 from Mus musculus (Mouse).